Here is a 346-residue protein sequence, read N- to C-terminus: N-acetyl-gamma-glutamyl-phosphate reductase (346 aa).

C149 is an active-site residue.

The protein belongs to the NAGSA dehydrogenase family. Type 1 subfamily.

The protein resides in the cytoplasm. The enzyme catalyses N-acetyl-L-glutamate 5-semialdehyde + phosphate + NADP(+) = N-acetyl-L-glutamyl 5-phosphate + NADPH + H(+). Its pathway is amino-acid biosynthesis; L-arginine biosynthesis; N(2)-acetyl-L-ornithine from L-glutamate: step 3/4. Catalyzes the NADPH-dependent reduction of N-acetyl-5-glutamyl phosphate to yield N-acetyl-L-glutamate 5-semialdehyde. The chain is N-acetyl-gamma-glutamyl-phosphate reductase from Geobacter metallireducens (strain ATCC 53774 / DSM 7210 / GS-15).